The primary structure comprises 191 residues: dTTP/UTP pyrophosphatase (191 aa).

The Proton acceptor role is filled by Asp70.

The protein belongs to the Maf family. YhdE subfamily. A divalent metal cation serves as cofactor.

The protein localises to the cytoplasm. The enzyme catalyses dTTP + H2O = dTMP + diphosphate + H(+). It carries out the reaction UTP + H2O = UMP + diphosphate + H(+). Nucleoside triphosphate pyrophosphatase that hydrolyzes dTTP and UTP. May have a dual role in cell division arrest and in preventing the incorporation of modified nucleotides into cellular nucleic acids. This Clostridium novyi (strain NT) protein is dTTP/UTP pyrophosphatase.